The primary structure comprises 207 residues: ATP synthase subunit 5, mitochondrial (207 aa).

It belongs to the ATPase delta chain family. As to quaternary structure, F-type ATPases have 2 components, CF(1) - the catalytic core - and CF(0) - the membrane proton channel. CF(1) has five subunits: alpha(3), beta(3), gamma(1), delta(1), epsilon(1). CF(0) has three main subunits: a, b and c.

The protein resides in the mitochondrion. The protein localises to the mitochondrion inner membrane. Mitochondrial membrane ATP synthase (F(1)F(0) ATP synthase or Complex V) produces ATP from ADP in the presence of a proton gradient across the membrane which is generated by electron transport complexes of the respiratory chain. F-type ATPases consist of two structural domains, F(1) - containing the extramembraneous catalytic core and F(0) - containing the membrane proton channel, linked together by a central stalk and a peripheral stalk. During catalysis, ATP synthesis in the catalytic domain of F(1) is coupled via a rotary mechanism of the central stalk subunits to proton translocation. Part of the complex F(0) domain and the peripheric stalk, which acts as a stator to hold the catalytic alpha(3)beta(3) subcomplex and subunit a/ATP6 static relative to the rotary elements. In Candida glabrata (strain ATCC 2001 / BCRC 20586 / JCM 3761 / NBRC 0622 / NRRL Y-65 / CBS 138) (Yeast), this protein is ATP synthase subunit 5, mitochondrial (ATP5).